A 128-amino-acid chain; its full sequence is Aspartate 1-decarboxylase (128 aa).

Ser25 acts as the Schiff-base intermediate with substrate; via pyruvic acid in catalysis. Pyruvic acid (Ser) is present on Ser25. Thr57 is a binding site for substrate. The Proton donor role is filled by Tyr58. Substrate is bound at residue 73–75; sequence GAA.

It belongs to the PanD family. As to quaternary structure, heterooctamer of four alpha and four beta subunits. The cofactor is pyruvate. In terms of processing, is synthesized initially as an inactive proenzyme, which is activated by self-cleavage at a specific serine bond to produce a beta-subunit with a hydroxyl group at its C-terminus and an alpha-subunit with a pyruvoyl group at its N-terminus.

The protein resides in the cytoplasm. The catalysed reaction is L-aspartate + H(+) = beta-alanine + CO2. It functions in the pathway cofactor biosynthesis; (R)-pantothenate biosynthesis; beta-alanine from L-aspartate: step 1/1. In terms of biological role, catalyzes the pyruvoyl-dependent decarboxylation of aspartate to produce beta-alanine. The polypeptide is Aspartate 1-decarboxylase (Ruminiclostridium cellulolyticum (strain ATCC 35319 / DSM 5812 / JCM 6584 / H10) (Clostridium cellulolyticum)).